Reading from the N-terminus, the 698-residue chain is Testis-specific gene 10 protein (698 aa).

Phosphoserine is present on Ser-163. The tract at residues Gln-556–Leu-689 is interaction with HIF1A. Polar residues predominate over residues His-659–Cys-670. The interval His-659–Leu-685 is disordered. The span at His-671–Leu-685 shows a compositional bias: basic and acidic residues. The residue at position 688 (Ser-688) is a Phosphoserine.

This sequence belongs to the CEP135/TSGA10 family. In terms of assembly, interacts with HIF1A. Processed into N-terminal 27-kDa and C-terminal 55-kDa fragments. Expressed in the testis, in spermatozoa (at protein level). Expressed in actively dividing fetal tissues, including sternum, intestine, limb, kidney and stomach.

Its subcellular location is the cytoplasm. It localises to the cytoskeleton. The protein localises to the microtubule organizing center. The protein resides in the centrosome. It is found in the centriole. Functionally, plays a role in spermatogenesis. When overexpressed, prevents nuclear localization of HIF1A. The sequence is that of Testis-specific gene 10 protein (TSGA10) from Homo sapiens (Human).